Consider the following 334-residue polypeptide: Protein-methionine-sulfoxide reductase catalytic subunit MsrP (334 aa).

The tat-type signal signal peptide spans 1–44 (MKKIRPLTEADVTAESAFFMQRRQVLKALGISAAALSLPSTAQA). Mo-molybdopterin contacts are provided by residues asparagine 88, 91–92 (YE), cysteine 146, threonine 181, asparagine 233, arginine 238, and 249–251 (GIK).

This sequence belongs to the MsrP family. As to quaternary structure, heterodimer of a catalytic subunit (MsrP) and a heme-binding subunit (MsrQ). Mo-molybdopterin serves as cofactor. Post-translationally, predicted to be exported by the Tat system. The position of the signal peptide cleavage has not been experimentally proven.

It localises to the periplasm. The catalysed reaction is L-methionyl-[protein] + a quinone + H2O = L-methionyl-(S)-S-oxide-[protein] + a quinol. It carries out the reaction L-methionyl-[protein] + a quinone + H2O = L-methionyl-(R)-S-oxide-[protein] + a quinol. In terms of biological role, part of the MsrPQ system that repairs oxidized periplasmic proteins containing methionine sulfoxide residues (Met-O), using respiratory chain electrons. Thus protects these proteins from oxidative-stress damage caused by reactive species of oxygen and chlorine generated by the host defense mechanisms. MsrPQ is essential for the maintenance of envelope integrity under bleach stress, rescuing a wide series of structurally unrelated periplasmic proteins from methionine oxidation, including the primary periplasmic chaperone SurA and the lipoprotein Pal. The catalytic subunit MsrP is non-stereospecific, being able to reduce both (R-) and (S-) diastereoisomers of methionine sulfoxide. The polypeptide is Protein-methionine-sulfoxide reductase catalytic subunit MsrP (Salmonella newport (strain SL254)).